A 229-amino-acid polypeptide reads, in one-letter code: Secretory carrier-associated membrane protein 4 (229 aa).

Residues 1 to 39 (MSEKENNFPPLPKFIPVKPCFYQNFSDEIPVEHQVLVKR) are Cytoplasmic-facing. 4 helical membrane-spanning segments follow: residues 40–60 (IYRLWMFYCATLGVNLIACLA), 61–81 (WWIGGGSGTNFGLAFVWLLLF), 105–125 (FMAFFFIFGAQFVLTVIQAIG), and 149–169 (VVMLLPAIMFSVSAAMMAIAI). Residues 170-229 (MKVHRIYRGAGGSFQKAQTEWNTGTWRNPPSREAQYNNFSGNSLPEYPTVPSYPGSGQWP) are Cytoplasmic-facing. Phosphothreonine is present on threonine 194. The segment at 208-229 (FSGNSLPEYPTVPSYPGSGQWP) is disordered.

This sequence belongs to the SCAMP family.

Its subcellular location is the membrane. Its function is as follows. Probably involved in membrane protein trafficking. This chain is Secretory carrier-associated membrane protein 4 (SCAMP4), found in Pongo abelii (Sumatran orangutan).